The sequence spans 95 residues: Cliotide T5 (95 aa).

Residues Gly-1–Asn-30 constitute a cross-link (cyclopeptide (Gly-Asn)). Disulfide bonds link Cys-4-Cys-20, Cys-8-Cys-22, and Cys-13-Cys-27. The propeptide at His-31–Asn-95 is removed in mature form.

Post-translationally, contains 3 disulfide bonds. This is a cyclic peptide. Expressed in stem, shoot, root, leaf, pod and nodule but not in flower and seed (at protein level).

In terms of biological role, probably participates in a plant defense mechanism. In Clitoria ternatea (Butterfly pea), this protein is Cliotide T5.